We begin with the raw amino-acid sequence, 713 residues long: Calpastatin (713 aa).

Disordered regions lie at residues 1 to 187 (MNPT…LDPM) and 211 to 506 (DKKE…PVLP). Residues 21–30 (PNKKRHKKQA) show a composition bias toward basic residues. K32 is covalently cross-linked (Glycyl lysine isopeptide (Lys-Gly) (interchain with G-Cter in SUMO2)). Residues 46–63 (VVHEKKTQEVKPKEHPEP) show a composition bias toward basic and acidic residues. K50 is modified (N6-acetyllysine). A compositionally biased stretch (polar residues) spans 85–94 (SRSNEQPTSE). Phosphoserine occurs at positions 87 and 134. T136 is subject to Phosphothreonine. Residues 171-223 (TEEDNTTYTGPEVLDPMSSTYIEELGKREVTLPPKYRELLDKKEGIPVPPPDT) form an Inhibitory domain 1 repeat. Phosphoserine is present on S244. 3 stretches are compositionally biased toward basic and acidic residues: residues 248–258 (DGKKTEKEKST), 304–332 (RKSE…KKCG), and 342–367 (YRLK…KPLS). One copy of the Inhibitory domain 2 repeat lies at 307-359 (EPELDLSSIKEIDEAKAKEEKLKKCGEDDETVPPEYRLKPAMDKDGKPLLPEA). A phosphoserine mark is found at S367, S369, and S376. Residues 370–379 (ELIDELSEDF) are compositionally biased toward acidic residues. The segment covering 380 to 397 (DQSKRKEKQSKPTEKTKE) has biased composition (basic and acidic residues). Residue S441 is modified to Phosphoserine. Residues 443–502 (GKKEADPEDGKPVEDKVKEKAKEEDREKLGEKEETIPPDYRLEEVKDKDGKTLPHKDPKE) are compositionally biased toward basic and acidic residues. The Inhibitory domain 3 repeat unit spans residues 447–500 (ADPEDGKPVEDKVKEKAKEEDREKLGEKEETIPPDYRLEEVKDKDGKTLPHKDP). Phosphoserine occurs at positions 517 and 528. Residues 536-713 (SAAVSEVVSQ…KQKSDGKSTS (178 aa)) form a disordered region. Positions 542–553 (VVSQTSAPTTHS) are enriched in polar residues. A phosphoserine mark is found at S575 and S577. One copy of the Inhibitory domain 4 repeat lies at 583-636 (PDPDENKPIEDKVKEKAEAEHRDKLGERDDTIPPEYRHLLDKDEEGKSTKPPTK). Basic and acidic residues-rich tracts occupy residues 583–646 (PDPD…KPEA) and 691–713 (KAKD…KSTS).

The protein belongs to the protease inhibitor I27 (calpastatin) family.

Its function is as follows. Specific inhibition of calpain (calcium-dependent cysteine protease). Plays a key role in postmortem tenderization of meat and have been proposed to be involved in muscle protein degradation in living tissue. This is Calpastatin (CAST) from Sus scrofa (Pig).